Consider the following 1093-residue polypeptide: Mediator of RNA polymerase II transcription subunit 14 (1093 aa).

2 disordered regions span residues 1 to 62 (MPGV…IDGH) and 1034 to 1065 (ETKS…ANDT). The span at 19–31 (DTQTPSNGDNLRN) shows a compositional bias: polar residues. The span at 41-62 (KGDKDHDPDKESYAGKPRIDGH) shows a compositional bias: basic and acidic residues. Residues 1040-1056 (DYSTQPAPENQSQTGAP) are compositionally biased toward polar residues.

Belongs to the Mediator complex subunit 14 family. As to quaternary structure, component of the Mediator complex.

It is found in the nucleus. Its function is as follows. Component of the Mediator complex, a coactivator involved in the regulated transcription of nearly all RNA polymerase II-dependent genes. Mediator functions as a bridge to convey information from gene-specific regulatory proteins to the basal RNA polymerase II transcription machinery. Mediator is recruited to promoters by direct interactions with regulatory proteins and serves as a scaffold for the assembly of a functional preinitiation complex with RNA polymerase II and the general transcription factors. The protein is Mediator of RNA polymerase II transcription subunit 14 (rgr1) of Aspergillus fumigatus (strain ATCC MYA-4609 / CBS 101355 / FGSC A1100 / Af293) (Neosartorya fumigata).